A 168-amino-acid polypeptide reads, in one-letter code: Photosystem I assembly protein Ycf3 (168 aa).

TPR repeat units follow at residues 35–68 (AFTY…EIDP), 72–105 (SYIL…NPFL), and 120–153 (GEQA…TPGN).

It belongs to the Ycf3 family.

It localises to the plastid. The protein resides in the chloroplast thylakoid membrane. Its function is as follows. Essential for the assembly of the photosystem I (PSI) complex. May act as a chaperone-like factor to guide the assembly of the PSI subunits. The sequence is that of Photosystem I assembly protein Ycf3 from Gossypium barbadense (Sea Island cotton).